The primary structure comprises 378 residues: Transcription elongation factor TFIIS (378 aa).

Residue Met1 is modified to N-acetylmethionine. A TFIIS N-terminal domain is found at 10 to 89 (EGAKKAADAA…EIWKKVVIEE (80 aa)). Positions 210–333 (VRDKIRELLV…DCERGLAAKA (124 aa)) constitute a TFIIS central domain. A TFIIS-type zinc finger spans residues 336 to 376 (DQFKCGRCGQRKCTYYQMQTRSADEPMTTYVTCVNCDNHWK). Cys340, Cys343, Cys368, and Cys371 together coordinate Zn(2+).

Expressed in roots, leaves and flowers.

The protein localises to the nucleus. In terms of biological role, necessary for efficient RNA polymerase II transcription elongation past template-encoded arresting sites. Involved in the control of seed dormancy and germination. This Arabidopsis thaliana (Mouse-ear cress) protein is Transcription elongation factor TFIIS.